The sequence spans 320 residues: MGRKRKHSETEAPAPVKKSDEPAPDRPKRTLLGWKDKSEGEAEKAKALTSSGFKNKEKVLVTCSRRISFRYRSLMLNIVSLLPHCKKDSKVEAKSSKGATLNELIELKNSNSCLFFECRKHKDLYMWMVKSPNGPSVKFLVKAVHAMEEMKLTGNHLKGSRPLLTFSSNFDKDAHWKLLKEMLTQVFGIPKEHRKSKPYHDHVFVFSIVDEHIWFRNYQISVPHNESDKIAKGGLDKMTLIEVGPRFCLNPIKIFAGSFGGPTLYENPLYVSPNQIRALEKRNKAGKFAKKIKAKTRKKMHELSNPLEPDEFADMWKDDE.

The interval 1–40 (MGRKRKHSETEAPAPVKKSDEPAPDRPKRTLLGWKDKSEG) is disordered. The span at 17–40 (KKSDEPAPDRPKRTLLGWKDKSEG) shows a compositional bias: basic and acidic residues. One can recognise a Brix domain in the interval 57–260 (EKVLVTCSRR…PIKIFAGSFG (204 aa)). Residues 297-320 (RKKMHELSNPLEPDEFADMWKDDE) form a disordered region. Residues 308-320 (EPDEFADMWKDDE) show a composition bias toward acidic residues.

Belongs to the BRX1 family. Expressed in roots, rosette leaves, stems, flowers, siliques and seeds.

It is found in the nucleus. It localises to the nucleolus. In terms of biological role, involved in pre-rRNA processing and required for biogenesis of the large (60S) ribosomal subunit. Required for proper development. The polypeptide is Ribosome biogenesis protein BRX1 homolog 2 (Arabidopsis thaliana (Mouse-ear cress)).